Consider the following 114-residue polypeptide: Putative small ubiquitin-related modifier 4 (114 aa).

Residues 1 to 20 form a disordered region; it reads MSTTSRVGSNEVKMEGQKRK. The 79-residue stretch at 26–104 folds into the Ubiquitin-like domain; that stretch reads THVTLKVKGQ…IDAMLCQQSG (79 aa). Glycine 104 participates in a covalent cross-link: Glycyl lysine isopeptide (Gly-Lys) (interchain with K-? in acceptor proteins).

The protein belongs to the ubiquitin family. SUMO subfamily. Interacts with SAE2, SCE1, SIZ1 and MMS21 Covalently attached to a number of proteins.

The protein resides in the nucleus. Its subcellular location is the cytoplasm. Its function is as follows. Ubiquitin-like protein which can be covalently attached to target lysines as a monomer. Does not seem to be involved in protein degradation and may function as an antagonist of ubiquitin in the degradation process. The polypeptide is Putative small ubiquitin-related modifier 4 (SUMO4) (Arabidopsis thaliana (Mouse-ear cress)).